We begin with the raw amino-acid sequence, 425 residues long: Lipoyl synthase, mitochondrial (425 aa).

Residues 1-33 (MAASSTRLRCLYASSSTWKTSPSQSLISLSRRY) constitute a mitochondrion transit peptide. Residues 17 to 55 (TWKTSPSQSLISLSRRYATTSSAPPTPSDESSSTLPKRR) form a disordered region. Positions 33–51 (YATTSSAPPTPSDESSSTL) are enriched in polar residues. Positions 142, 147, 153, 173, 177, 180, and 388 each coordinate [4Fe-4S] cluster. A Radical SAM core domain is found at 156-377 (GSDKSAATAT…RQRALEMGFL (222 aa)).

Belongs to the radical SAM superfamily. Lipoyl synthase family. It depends on [4Fe-4S] cluster as a cofactor.

The protein resides in the mitochondrion. The enzyme catalyses [[Fe-S] cluster scaffold protein carrying a second [4Fe-4S](2+) cluster] + N(6)-octanoyl-L-lysyl-[protein] + 2 oxidized [2Fe-2S]-[ferredoxin] + 2 S-adenosyl-L-methionine + 4 H(+) = [[Fe-S] cluster scaffold protein] + N(6)-[(R)-dihydrolipoyl]-L-lysyl-[protein] + 4 Fe(3+) + 2 hydrogen sulfide + 2 5'-deoxyadenosine + 2 L-methionine + 2 reduced [2Fe-2S]-[ferredoxin]. Its pathway is protein modification; protein lipoylation via endogenous pathway; protein N(6)-(lipoyl)lysine from octanoyl-[acyl-carrier-protein]: step 2/2. Its function is as follows. Catalyzes the radical-mediated insertion of two sulfur atoms into the C-6 and C-8 positions of the octanoyl moiety bound to the lipoyl domains of lipoate-dependent enzymes, thereby converting the octanoylated domains into lipoylated derivatives. This is Lipoyl synthase, mitochondrial from Talaromyces marneffei (strain ATCC 18224 / CBS 334.59 / QM 7333) (Penicillium marneffei).